An 895-amino-acid polypeptide reads, in one-letter code: Cellulose 1,4-beta-cellobiosidase (895 aa).

A signal peptide spans 1–27 (MNFRRMLCAAIVLTIVLSIMLPSTVFA). The region spanning 40–199 (NDLLYERTFD…YLDDVSLYDP (160 aa)) is the CBM-cenC domain. The linker stretch occupies residues 199-240 (PRFVKPVEYVLPQPDVRVNQVGYLPFAKKYATVVSSSTSPLK). Residues 241–815 (WQLLNSANQV…WVTAYLDEID (575 aa)) are catalytic. Aspartate 386 acts as the Nucleophile in catalysis. Catalysis depends on residues histidine 737, aspartate 786, and glutamate 795. The region spanning 828–894 (PEVIYGDCNG…ILKEIDVLPH (67 aa)) is the Dockerin domain.

It belongs to the glycosyl hydrolase 9 (cellulase E) family.

It localises to the secreted. The enzyme catalyses Hydrolysis of (1-&gt;4)-beta-D-glucosidic linkages in cellulose and cellotetraose, releasing cellobiose from the non-reducing ends of the chains.. Its activity is regulated as follows. Inhibited by cellobiose. In Acetivibrio thermocellus (Hungateiclostridium thermocellum), this protein is Cellulose 1,4-beta-cellobiosidase (celK).